Consider the following 315-residue polypeptide: Sulfate adenylyltransferase subunit 2 1 (315 aa).

The disordered stretch occupies residues 287 to 315 (DSSSSERQGRAIDHDQSGSMERKKREGYF). Over residues 293–315 (RQGRAIDHDQSGSMERKKREGYF) the composition is skewed to basic and acidic residues.

This sequence belongs to the PAPS reductase family. CysD subfamily. Heterodimer composed of CysD, the smaller subunit, and CysN.

It carries out the reaction sulfate + ATP + H(+) = adenosine 5'-phosphosulfate + diphosphate. It participates in sulfur metabolism; hydrogen sulfide biosynthesis; sulfite from sulfate: step 1/3. In terms of biological role, with CysN forms the ATP sulfurylase (ATPS) that catalyzes the adenylation of sulfate producing adenosine 5'-phosphosulfate (APS) and diphosphate, the first enzymatic step in sulfur assimilation pathway. APS synthesis involves the formation of a high-energy phosphoric-sulfuric acid anhydride bond driven by GTP hydrolysis by CysN coupled to ATP hydrolysis by CysD. The sequence is that of Sulfate adenylyltransferase subunit 2 1 from Alkalilimnicola ehrlichii (strain ATCC BAA-1101 / DSM 17681 / MLHE-1).